We begin with the raw amino-acid sequence, 639 residues long: Threonine--tRNA ligase (639 aa).

One can recognise a TGS domain in the interval Met1–Thr61. The catalytic stretch occupies residues Asp242–Pro533. Zn(2+) is bound by residues Cys333, His384, and His510.

The protein belongs to the class-II aminoacyl-tRNA synthetase family. As to quaternary structure, homodimer. It depends on Zn(2+) as a cofactor.

Its subcellular location is the cytoplasm. The enzyme catalyses tRNA(Thr) + L-threonine + ATP = L-threonyl-tRNA(Thr) + AMP + diphosphate + H(+). Functionally, catalyzes the attachment of threonine to tRNA(Thr) in a two-step reaction: L-threonine is first activated by ATP to form Thr-AMP and then transferred to the acceptor end of tRNA(Thr). Also edits incorrectly charged L-seryl-tRNA(Thr). In Verminephrobacter eiseniae (strain EF01-2), this protein is Threonine--tRNA ligase.